Consider the following 212-residue polypeptide: ER lumen protein-retaining receptor 2 (212 aa).

Residues 1–4 (MNIF) lie on the Lumenal side of the membrane. The chain crosses the membrane as a helical span at residues 5 to 24 (RLTGDLSHLAAIVILLLKIW). Over 25 to 32 (KTRSCAGI) the chain is Cytoplasmic. The helical transmembrane segment at 33 to 52 (SGKSQLLFALVFTTRYLDLF) threads the bilayer. The tract at residues 47–48 (RY) is interaction with the K-D-E-L motif on target proteins. The Lumenal portion of the chain corresponds to 53 to 58 (TSFISL). A helical membrane pass occupies residues 59–79 (YNTSMKLIYIACSYATVYLIY). Over 80-92 (MKFKATYDGNHDT) the chain is Cytoplasmic. The chain crosses the membrane as a helical span at residues 93 to 110 (FRVEFLVVPVGGLSFLVN). At 111-116 (HDFSPL) the chain is on the lumenal side. The chain crosses the membrane as a helical span at residues 117-135 (EILWTFSIYLESVAILPQL). Topologically, residues 136–149 (FMISKTGEAETITT) are cytoplasmic. A helical membrane pass occupies residues 150-168 (HYLFFLGLYRALYLVNWIW). Positions 159–169 (RALYLVNWIWR) are interaction with the K-D-E-L motif on target proteins. The Lumenal segment spans residues 169-178 (RFYFEGFFDL). A helical transmembrane segment spans residues 179 to 199 (IAVVAGVVQTILYCDFFYLYI). Topologically, residues 200-212 (TKVLKGKKLSLPA) are cytoplasmic. The important for recycling of cargo proteins with the sequence motif K-D-E-L from the Golgi to the endoplasmic reticulum stretch occupies residues 204–207 (KGKK).

Belongs to the ERD2 family.

The protein localises to the endoplasmic reticulum membrane. Its subcellular location is the golgi apparatus membrane. It localises to the cytoplasmic vesicle. It is found in the COPI-coated vesicle membrane. Membrane receptor that binds the K-D-E-L sequence motif in the C-terminal part of endoplasmic reticulum resident proteins and maintains their localization in that compartment by participating to their vesicle-mediated recycling back from the Golgi. Binding is pH dependent, and is optimal at pH 5-5.4. This Mus musculus (Mouse) protein is ER lumen protein-retaining receptor 2 (Kdelr2).